The following is a 156-amino-acid chain: Transcription antitermination protein NusB (156 aa).

This sequence belongs to the NusB family.

In terms of biological role, involved in transcription antitermination. Required for transcription of ribosomal RNA (rRNA) genes. Binds specifically to the boxA antiterminator sequence of the ribosomal RNA (rrn) operons. The protein is Transcription antitermination protein NusB of Mycobacterium bovis (strain ATCC BAA-935 / AF2122/97).